The sequence spans 700 residues: ABC transporter B family member 26, chloroplastic (700 aa).

The transit peptide at 1–59 (MAQQVLGCTSRPIRVSLHRCSVITTSDTIRRKNLRFVRNPRLSFSLQSSTRNYRLPSIN) directs the protein to the chloroplast. Transmembrane regions (helical) follow at residues 137-157 (WVIFAAFSTLIVAALSEITIP), 182-202 (LVTLCVTSGICSGIRGCFFGI), and 268-288 (LIYLLILSWPLGLCTLVICCI). One can recognise an ABC transmembrane type-1 domain in the interval 139–421 (IFAAFSTLIV…VGDNLSSLMQ (283 aa)). An ABC transporter domain is found at 455 to 694 (IEFVDVSFSY…DGLYARLTKR (240 aa)). Position 490–497 (490–497 (GLSGSGKS)) interacts with ATP.

It belongs to the ABC transporter superfamily. ABCB family. Multidrug resistance exporter (TC 3.A.1.201) subfamily.

It is found in the plastid. The protein resides in the chloroplast membrane. This is ABC transporter B family member 26, chloroplastic (ABCB26) from Arabidopsis thaliana (Mouse-ear cress).